Reading from the N-terminus, the 154-residue chain is Transcriptional repressor NrdR (154 aa).

A zinc finger spans residues C3–C34. Positions P49–E139 constitute an ATP-cone domain.

Belongs to the NrdR family. Zn(2+) serves as cofactor.

Functionally, negatively regulates transcription of bacterial ribonucleotide reductase nrd genes and operons by binding to NrdR-boxes. In Pseudomonas fluorescens (strain Pf0-1), this protein is Transcriptional repressor NrdR.